The following is a 606-amino-acid chain: Endonuclease 8-like 3 (606 aa).

The Schiff-base intermediate with DNA; via amino nitrogen role is filled by Val2. The interval 31–51 (ALQGLGGPGSPPAAPGPMGTS) is disordered. Residues Asn194 and Arg273 each contribute to the DNA site. Residues 249–283 (KVYKRPNCGQCCCKITVCRLGENNRMTYFCPHCQK) form an FPG-type zinc finger. The RanBP2-type zinc-finger motif lies at 319–348 (SEEQWTCEVCTLINKLSSKTCDACLTSRPA). Ser451 bears the Phosphoserine mark. Cys508, His511, Cys534, Cys542, Cys555, His557, Cys580, and Cys588 together coordinate Zn(2+). 2 consecutive GRF-type zinc fingers follow at residues 508–551 (CSKH…ADLS) and 555–597 (CNHG…AQNG).

It belongs to the FPG family.

The protein localises to the nucleus. It localises to the chromosome. It carries out the reaction 2'-deoxyribonucleotide-(2'-deoxyribose 5'-phosphate)-2'-deoxyribonucleotide-DNA = a 3'-end 2'-deoxyribonucleotide-(2,3-dehydro-2,3-deoxyribose 5'-phosphate)-DNA + a 5'-end 5'-phospho-2'-deoxyribonucleoside-DNA + H(+). Its function is as follows. DNA glycosylase which prefers single-stranded DNA (ssDNA), or partially ssDNA structures such as bubble and fork structures, to double-stranded DNA (dsDNA). Mediates interstrand cross-link repair in response to replication stress: acts by mediating DNA glycosylase activity, cleaving one of the two N-glycosyl bonds comprising the interstrand cross-link, which avoids the formation of a double-strand break but generates an abasic site that is bypassed by translesion synthesis polymerases. In vitro, displays strong glycosylase activity towards the hydantoin lesions spiroiminodihydantoin (Sp) and guanidinohydantoin (Gh) in both ssDNA and dsDNA; also recognizes FapyA, FapyG, 5-OHU, 5-OHC, 5-OHMH, Tg and 8-oxoA lesions in ssDNA. No activity on 8-oxoG detected. Also shows weak DNA-(apurinic or apyrimidinic site) lyase activity. In vivo, appears to be the primary enzyme involved in removing Sp and Gh from ssDNA in neonatal tissues. The polypeptide is Endonuclease 8-like 3 (NEIL3) (Bos taurus (Bovine)).